The chain runs to 540 residues: Threonine--tRNA ligase catalytic subunit (540 aa).

Residues D134–P428 are catalytic. The Zn(2+) site is built by C226, H277, and H405.

Belongs to the class-II aminoacyl-tRNA synthetase family. As to quaternary structure, homodimer. Probably interacts with its editing subunit. Requires Zn(2+) as cofactor.

It localises to the cytoplasm. The enzyme catalyses tRNA(Thr) + L-threonine + ATP = L-threonyl-tRNA(Thr) + AMP + diphosphate + H(+). Functionally, catalyzes the attachment of threonine to tRNA(Thr) in a two-step reaction: L-threonine is first activated by ATP to form Thr-AMP and then transferred to the acceptor end of tRNA(Thr). Also activates L-serine and transfers it to tRNA(Thr) but cannot deacylate incorrectly charged amino acid; unlike most archaea the editing function is found in a freestanding protein. The sequence is that of Threonine--tRNA ligase catalytic subunit from Sulfurisphaera tokodaii (strain DSM 16993 / JCM 10545 / NBRC 100140 / 7) (Sulfolobus tokodaii).